Here is a 78-residue protein sequence, read N- to C-terminus: Putative membrane protein insertion efficiency factor (78 aa).

Belongs to the UPF0161 family.

Its subcellular location is the cell membrane. In terms of biological role, could be involved in insertion of integral membrane proteins into the membrane. The sequence is that of Putative membrane protein insertion efficiency factor from Bacillus mycoides (strain KBAB4) (Bacillus weihenstephanensis).